The sequence spans 269 residues: Serine/arginine-rich splicing factor 5 (269 aa).

Residues 4–74 (CRVFIGRLNP…ERVTIEHARA (71 aa)) enclose the RRM 1 domain. Positions 73 to 105 (RARSRGGRGRGRYSDRFSSRRPRNDRRNAPPVR) are disordered. The segment covering 74 to 83 (ARSRGGRGRG) has biased composition (basic residues). The residue at position 86 (serine 86) is a Phosphoserine. An RRM 2 domain is found at 108–189 (NRLIVENLSS…SKRHRSRSRS (82 aa)). Lysine 167 carries the post-translational modification N6-acetyllysine. The disordered stretch occupies residues 174-269 (IKLIEGSKRH…SRSRSVDSGN (96 aa)). Residues 181-226 (KRHRSRSRSRSRTRSSSRSRSRSRSRRSKSYSRSRSRSRSRSKSRS) are compositionally biased toward basic residues. Serine 224, serine 226, serine 230, serine 247, and serine 250 each carry phosphoserine. Residues 239–251 (RGSSSRSKSPASV) show a composition bias toward low complexity.

This sequence belongs to the splicing factor SR family. Found in a pre-mRNA splicing complex with SRSF4/SFRS4, SRSF5/SFRS5, SNRNP70, SNRPA1, SRRM1 and SRRM2. Interacts with RBMY; the interaction inhibits SRSF5 pre-mRNA splicing. Interacts (via RS domain) with PHF5A (via N-terminus). Post-translationally, extensively phosphorylated on serine residues in the RS domain.

It localises to the nucleus. Functionally, may be required for progression through G1 and entry into S phase of cell growth. May play a regulatory role in pre-mRNA splicing. Autoregulates its own expression. Plays a role in constitutive splicing and can modulate the selection of alternative splice sites. The chain is Serine/arginine-rich splicing factor 5 (Srsf5) from Mus musculus (Mouse).